The following is a 278-amino-acid chain: MITGRTALYGVVGHPVAHSRSPEMQNAAFARLGVDAIYVALPVAPERIDEALRGAHALGFQGLNVTVPHKPRAASLCHALDPVATAVGAANTLRRTRDGWEGFNTDAPACRSLLEAAGVARGSRALLVGAGGAARAAAWALVQLGTELRVAARREEAAAELCRDLAAAVPGADLAAADFEDLEAEADAAAVVVNGTSVGLPGHEGRLPPLRFRADQVVLDFVYGDTDLARAARAAGARLVSGEQVLVRQGALAFTIWTGQPAPEADMARALEAREGAR.

Shikimate is bound by residues 19-21 and Thr66; that span reads SRS. Lys70 (proton acceptor) is an active-site residue. 2 residues coordinate shikimate: Asn91 and Asp106. Residues 129-133 and Phe221 contribute to the NADP(+) site; that span reads GAGGA. Position 223 (Tyr223) interacts with shikimate. Gly242 contacts NADP(+).

This sequence belongs to the shikimate dehydrogenase family. As to quaternary structure, homodimer.

It carries out the reaction shikimate + NADP(+) = 3-dehydroshikimate + NADPH + H(+). It functions in the pathway metabolic intermediate biosynthesis; chorismate biosynthesis; chorismate from D-erythrose 4-phosphate and phosphoenolpyruvate: step 4/7. Its function is as follows. Involved in the biosynthesis of the chorismate, which leads to the biosynthesis of aromatic amino acids. Catalyzes the reversible NADPH linked reduction of 3-dehydroshikimate (DHSA) to yield shikimate (SA). The chain is Shikimate dehydrogenase (NADP(+)) from Anaeromyxobacter sp. (strain K).